The primary structure comprises 465 residues: Putative adhesin P1-like protein MPN_286 (465 aa).

Disordered regions lie at residues 9–48 (GNGH…STFS), 59–78 (QGTL…PKWP), and 93–167 (WRND…LPPN). Over residues 21–37 (SNSSTSGVTTQGQQSQN) the composition is skewed to low complexity. Residues 38 to 48 (ASGTEPASTFS) show a composition bias toward polar residues. Positions 111–131 (TSATGSGQQGSSSGTTNSAGN) are enriched in low complexity. Residues 135-144 (LKQDKVDKSG) are compositionally biased toward basic and acidic residues. A compositionally biased stretch (polar residues) spans 145–156 (DSVTVAETTSGD). Residues 157 to 167 (NLTNYTNLPPN) show a composition bias toward low complexity.

Belongs to the adhesin P1 family.

In Mycoplasma pneumoniae (strain ATCC 29342 / M129 / Subtype 1) (Mycoplasmoides pneumoniae), this protein is Putative adhesin P1-like protein MPN_286.